The primary structure comprises 2036 residues: Proline-rich protein 12 (2036 aa).

3 disordered regions span residues 210 to 283 (GGGV…RALP), 331 to 587 (CSPL…GAPG), and 649 to 697 (APSP…DPQR). Residues 223–240 (QTPPYRPGPPDPPPPPRH) show a composition bias toward pro residues. Low complexity predominate over residues 249-258 (ASSSAAAAAA). Residues serine 332 and serine 340 each carry the phosphoserine modification. Low complexity predominate over residues 340 to 365 (SPGAGEPSKAGPSGATAGASGRATGP). Gly residues-rich tracts occupy residues 367-380 (AAGG…GGGY) and 391-400 (TGKGGYGAAA). Composition is skewed to low complexity over residues 411-432 (STAT…TGKA) and 441-458 (QAYS…QAYG). Residues 479–490 (PPQPPSGPPPPG) show a composition bias toward pro residues. 2 stretches are compositionally biased toward polar residues: residues 493–504 (TCQSYSPDQLQG) and 523–537 (GLPT…STGH). Residues 543–558 (GHGGGWGPSSLGGGGE) are compositionally biased toward gly residues. Residue serine 651 is modified to Phosphoserine. A compositionally biased stretch (gly residues) spans 673–683 (GLGGSGGAGGP). Residue threonine 738 is modified to Phosphothreonine. 4 disordered regions span residues 758-850 (AFLQ…PLQL), 859-878 (LEPA…DPPG), 886-925 (ALEP…KAPR), and 952-1068 (EMFG…CSTK). Residues 802-817 (LPSVLSHAPSPSPSAS) are compositionally biased toward low complexity. Over residues 833 to 847 (PQPPPPPPPPPPPMP) the composition is skewed to pro residues. Serine 865 carries the post-translational modification Phosphoserine. Positions 1037-1052 (AAPPPPPPPPPPPAPA) are enriched in pro residues. Phosphoserine occurs at positions 1077 and 1135. Disordered stretches follow at residues 1120-1260 (RLPD…SLTR), 1294-1347 (RHPP…GGAL), 1376-1573 (TLPS…GEGI), and 1668-1840 (HRPP…PGRL). Over residues 1182–1194 (PTTAGPASASTPT) the composition is skewed to low complexity. Residues 1199–1208 (KPRGRGRGRG) are compositionally biased toward basic residues. Over residues 1209–1223 (RKAEEAGGTRLEPLK) the composition is skewed to basic and acidic residues. Lysine 1223 is modified (N6-acetyllysine). Over residues 1239 to 1257 (GTSSGDAISGTDHNSLDSS) the composition is skewed to polar residues. Position 1304 is a phosphothreonine (threonine 1304). 2 stretches are compositionally biased toward pro residues: residues 1306 to 1317 (PLSPPKSVPPSV) and 1324 to 1338 (PQPP…PPPS). Serine 1308 is modified (phosphoserine). Phosphoserine occurs at positions 1381, 1382, and 1387. 2 stretches are compositionally biased toward pro residues: residues 1420–1438 (DGPP…PLPG) and 1458–1535 (PPTP…APSP). The span at 1541–1553 (PDTRPLHLAKKQE) shows a compositional bias: basic and acidic residues. Threonine 1561 carries the post-translational modification Phosphothreonine. The residue at position 1568 (serine 1568) is a Phosphoserine. Over residues 1691 to 1703 (APPPKAPAPPPKP) the composition is skewed to pro residues. Composition is skewed to basic and acidic residues over residues 1704 to 1715 (ETPEKTTSEKPP) and 1737 to 1769 (PVEK…RPER). Position 1705 is a phosphothreonine (threonine 1705). A compositionally biased stretch (low complexity) spans 1817-1829 (GSSSDSESSPGAP). Residue serine 1925 is modified to Phosphoserine.

It is found in the nucleus. Its subcellular location is the postsynaptic density. The protein localises to the synapse. The protein resides in the synaptosome. The protein is Proline-rich protein 12 of Homo sapiens (Human).